Consider the following 620-residue polypeptide: Preterminal protein (620 aa).

The short motif at 356–365 (RLPMRRRRRR) is the Nuclear localization signal element. Ser545 bears the O-(5'-phospho-DNA)-serine mark.

Belongs to the adenoviridae terminal protein family. Heterodimer with the polymerase; this heterodimer binds to bp 9 to 18 of the genome. Interacts with host POU2F1; POU2F1 binds to the auxiliary sequences in the inverted terminal repeats and tethers the pTP-POL heterodimer to the origin DNA thereby participating in the assembly of the pre-initiation complex (POL-TP-DBP-NFIA-POU2F1). Preterminal protein is used to replicate viral genome, upon genomic encapsidation it is processed first into iTP and finally into TP by adenovirus protease.

Its subcellular location is the host nucleus matrix. In terms of biological role, protein covalently bound to the viral DNA that acts as a primer for viral genomic replication by DNA strand displacement. Assembles on the viral origin of replication in an initiation complex with viral polymerase, DBP, host NFIA and host POU2F1/OCT1. During initiation, the polymerase covalently couples the first dCTP with Ser-580 of pTP. The terminal protein stimulates the template activity over 20 fold compared to protein-free templates. Neo-synthesized viral genomes are linked to two preterminal proteins, one for each 5' end. These new genomes are encapsidated in the nucleus, and during capsid maturation by viral protease, preterminal protein is first cleaved into intermediary (iTP), then into mature TP. May play a role in host nuclear matrix localization of genomic DNA. This chain is Preterminal protein, found in Bovine adenovirus 2 (BAdV-2).